A 120-amino-acid chain; its full sequence is Ribosome-binding factor A (120 aa).

The protein belongs to the RbfA family. In terms of assembly, monomer. Binds 30S ribosomal subunits, but not 50S ribosomal subunits or 70S ribosomes.

The protein resides in the cytoplasm. Its function is as follows. One of several proteins that assist in the late maturation steps of the functional core of the 30S ribosomal subunit. Associates with free 30S ribosomal subunits (but not with 30S subunits that are part of 70S ribosomes or polysomes). Required for efficient processing of 16S rRNA. May interact with the 5'-terminal helix region of 16S rRNA. The protein is Ribosome-binding factor A of Limosilactobacillus fermentum (strain NBRC 3956 / LMG 18251) (Lactobacillus fermentum).